Reading from the N-terminus, the 340-residue chain is Glyceraldehyde-3-phosphate dehydrogenase (340 aa).

NAD(+) is bound by residues 11–12 (SI) and glycine 111. 140–142 (SCN) is a binding site for D-glyceraldehyde 3-phosphate. Residue cysteine 141 is the Nucleophile of the active site. Arginine 169 is an NAD(+) binding site. 195 to 196 (HG) serves as a coordination point for D-glyceraldehyde 3-phosphate. Glutamine 303 lines the NAD(+) pocket.

The protein belongs to the glyceraldehyde-3-phosphate dehydrogenase family. Homotetramer.

Its subcellular location is the cytoplasm. It carries out the reaction D-glyceraldehyde 3-phosphate + phosphate + NADP(+) = (2R)-3-phospho-glyceroyl phosphate + NADPH + H(+). The enzyme catalyses D-glyceraldehyde 3-phosphate + phosphate + NAD(+) = (2R)-3-phospho-glyceroyl phosphate + NADH + H(+). It functions in the pathway carbohydrate degradation; glycolysis; pyruvate from D-glyceraldehyde 3-phosphate: step 1/5. This Methanococcus maripaludis (strain C6 / ATCC BAA-1332) protein is Glyceraldehyde-3-phosphate dehydrogenase.